Consider the following 188-residue polypeptide: Murein DD-endopeptidase MepS/Murein LD-carboxypeptidase (188 aa).

Positions M1 to A26 are cleaved as a signal peptide. The N-palmitoyl cysteine moiety is linked to residue C27. C27 is lipidated: S-diacylglycerol cysteine. In terms of domain architecture, NlpC/P60 spans V64–L185. Residue C94 is the Nucleophile of the active site. The active-site Proton acceptor is H145. Residue H157 is part of the active site.

The protein belongs to the peptidase C40 family. Monomer.

It localises to the cell outer membrane. It catalyses the reaction N-acetyl-D-glucosaminyl-N-acetylmuramoyl-L-alanyl-meso-2,6-diaminoheptanedioyl-D-alanine + H2O = N-acetyl-D-glucosaminyl-N-acetylmuramoyl-L-alanyl-meso-2,6-diaminoheptanedioate + D-alanine. The protein operates within cell wall biogenesis; cell wall polysaccharide biosynthesis. Functionally, a murein DD-endopeptidase with specificity for D-Ala-meso-diaminopimelic acid (mDAP) cross-links. Its role is probably to cleave D-Ala-mDAP cross-links to allow insertion of new glycans and thus cell wall expansion. Functionally redundant with MepM and MepH. Also has weak LD-carboxypeptidase activity on L-mDAP-D-Ala peptide bonds. The protein is Murein DD-endopeptidase MepS/Murein LD-carboxypeptidase (mepS) of Escherichia coli O157:H7.